A 368-amino-acid chain; its full sequence is Alanine racemase (368 aa).

The active-site Proton acceptor; specific for D-alanine is the lysine 40. N6-(pyridoxal phosphate)lysine is present on lysine 40. Arginine 134 is a binding site for substrate. Tyrosine 263 functions as the Proton acceptor; specific for L-alanine in the catalytic mechanism. Residue methionine 310 participates in substrate binding.

It belongs to the alanine racemase family. Pyridoxal 5'-phosphate is required as a cofactor.

It catalyses the reaction L-alanine = D-alanine. It participates in amino-acid biosynthesis; D-alanine biosynthesis; D-alanine from L-alanine: step 1/1. Its function is as follows. Catalyzes the interconversion of L-alanine and D-alanine. May also act on other amino acids. This chain is Alanine racemase (alr), found in Listeria monocytogenes serotype 4a (strain HCC23).